The sequence spans 72 residues: Large ribosomal subunit protein bL31 (72 aa).

The Zn(2+) site is built by cysteine 16, cysteine 18, cysteine 38, and cysteine 41.

This sequence belongs to the bacterial ribosomal protein bL31 family. Type A subfamily. As to quaternary structure, part of the 50S ribosomal subunit. It depends on Zn(2+) as a cofactor.

Functionally, binds the 23S rRNA. The polypeptide is Large ribosomal subunit protein bL31 (Vibrio atlanticus (strain LGP32) (Vibrio splendidus (strain Mel32))).